The sequence spans 589 residues: Aspartate--tRNA ligase (589 aa).

Glu-175 provides a ligand contact to L-aspartate. Residues 199–202 (QLFK) form an aspartate region. Arg-221 serves as a coordination point for L-aspartate. Residues 221–223 (RDE) and Gln-230 contribute to the ATP site. Residue His-449 participates in L-aspartate binding. Glu-483 lines the ATP pocket. Position 490 (Arg-490) interacts with L-aspartate. 535 to 538 (GLDR) serves as a coordination point for ATP.

It belongs to the class-II aminoacyl-tRNA synthetase family. Type 1 subfamily. In terms of assembly, homodimer.

Its subcellular location is the cytoplasm. It carries out the reaction tRNA(Asp) + L-aspartate + ATP = L-aspartyl-tRNA(Asp) + AMP + diphosphate. In terms of biological role, catalyzes the attachment of L-aspartate to tRNA(Asp) in a two-step reaction: L-aspartate is first activated by ATP to form Asp-AMP and then transferred to the acceptor end of tRNA(Asp). The sequence is that of Aspartate--tRNA ligase from Lysinibacillus sphaericus (strain C3-41).